A 940-amino-acid polypeptide reads, in one-letter code: Phosphoenolpyruvate carboxylase (940 aa).

Catalysis depends on residues His138 and Lys603.

The protein belongs to the PEPCase type 1 family. The cofactor is Mg(2+).

The enzyme catalyses oxaloacetate + phosphate = phosphoenolpyruvate + hydrogencarbonate. In terms of biological role, forms oxaloacetate, a four-carbon dicarboxylic acid source for the tricarboxylic acid cycle. In Streptococcus thermophilus (strain CNRZ 1066), this protein is Phosphoenolpyruvate carboxylase.